The chain runs to 772 residues: Polyribonucleotide nucleotidyltransferase (772 aa).

Residues Asp-486 and Asp-492 each contribute to the Mg(2+) site. The 60-residue stretch at 553–612 (PRIETLQIDKSKIRDVIGTGGKVIREIVATTGAKVDIDDEGLIKISSSDLTQIEAAKNWI) folds into the KH domain. Residues 622 to 690 (GKIYKGKVVN…QRGKVRLSMR (69 aa)) enclose the S1 motif domain. The segment at 695-772 (ETGAELEDTR…HMPAFLKSDD (78 aa)) is disordered. Residues 701 to 760 (EDTRPPREPREPRGDRGDRGDRGDRRGPRGDRGPRREGGDRGPRREGGDRPRRDRDDGPA) are compositionally biased toward basic and acidic residues.

The protein belongs to the polyribonucleotide nucleotidyltransferase family. Mg(2+) is required as a cofactor.

It localises to the cytoplasm. The catalysed reaction is RNA(n+1) + phosphate = RNA(n) + a ribonucleoside 5'-diphosphate. Involved in mRNA degradation. Catalyzes the phosphorolysis of single-stranded polyribonucleotides processively in the 3'- to 5'-direction. This Novosphingobium aromaticivorans (strain ATCC 700278 / DSM 12444 / CCUG 56034 / CIP 105152 / NBRC 16084 / F199) protein is Polyribonucleotide nucleotidyltransferase.